A 438-amino-acid chain; its full sequence is Putative F-box protein At5g15660 (438 aa).

The tract at residues 1 to 24 is disordered; that stretch reads MRRRSKKIKTENNSNPETSEERNK. The region spanning 22-68 is the F-box domain; sequence RNKFDEIPHDLVIEILERLPLKSVARFLTVSKLWATTIRSPDFRKSY.

In Arabidopsis thaliana (Mouse-ear cress), this protein is Putative F-box protein At5g15660.